The sequence spans 242 residues: MNLRSKVDSQPAYVLHSYPFRETSLIVEVFSRDFGRMALLARGARRPRSAIRGLLMAFQPLEIAWAGKGEVLTLMKAEWQGGLPLLAGEALFCGYYLNELLMHLLPREDAHEQLFASYAKMLALLAADPSGKVREADLRCFEKALLQELGYGLTLNHDSDANLIEPDTFYTYRIEQGPVRIDHGEGATQVVRGKTLLDLDAEDFSDPRTRHEAKALMRMLMAYYLAGKELETRKIFKELQEL.

Belongs to the RecO family.

Involved in DNA repair and RecF pathway recombination. The chain is DNA repair protein RecO from Dechloromonas aromatica (strain RCB).